Consider the following 510-residue polypeptide: ATP synthase subunit alpha (510 aa).

169 to 176 (GDRQTGKS) provides a ligand contact to ATP.

The protein belongs to the ATPase alpha/beta chains family. As to quaternary structure, F-type ATPases have 2 components, CF(1) - the catalytic core - and CF(0) - the membrane proton channel. CF(1) has five subunits: alpha(3), beta(3), gamma(1), delta(1), epsilon(1). CF(0) has three main subunits: a(1), b(2) and c(9-12). The alpha and beta chains form an alternating ring which encloses part of the gamma chain. CF(1) is attached to CF(0) by a central stalk formed by the gamma and epsilon chains, while a peripheral stalk is formed by the delta and b chains.

It is found in the cell membrane. The catalysed reaction is ATP + H2O + 4 H(+)(in) = ADP + phosphate + 5 H(+)(out). Functionally, produces ATP from ADP in the presence of a proton gradient across the membrane. The alpha chain is a regulatory subunit. The polypeptide is ATP synthase subunit alpha (Wigglesworthia glossinidia brevipalpis).